Consider the following 217-residue polypeptide: Small ribosomal subunit protein uS3c (217 aa).

One can recognise a KH type-2 domain in the interval 39–109 (IRSCIEKQLH…QIRINLIEIT (71 aa)).

Belongs to the universal ribosomal protein uS3 family. In terms of assembly, part of the 30S ribosomal subunit.

The protein resides in the plastid. It localises to the chloroplast. In Gracilaria tenuistipitata var. liui (Red alga), this protein is Small ribosomal subunit protein uS3c (rps3).